Consider the following 696-residue polypeptide: Verrucotoxin subunit beta (696 aa).

Residues 506–696 enclose the B30.2/SPRY domain; it reads HMPGVETIKD…GCTTESQWSN (191 aa).

This sequence belongs to the SNTX/VTX toxin family. As to quaternary structure, tetramer composed of 2 alpha and 2 beta subunits. Post-translationally, glycosylated. In terms of tissue distribution, expressed by the venom gland.

The protein resides in the secreted. This lethal (towards mice) toxin induces hemolytic, cytolytic and hypotensive activities. Inhibits calcium channels and may activate ATP-sensitive potassium channels in frog atrial heart muscle. In guinea-pig ventricular myocytes, it modulates calcium channel activity through the beta-adrenoceptor-cAMP-PKA pathway (ADRB). This is Verrucotoxin subunit beta from Synanceia verrucosa (Reef stonefish).